We begin with the raw amino-acid sequence, 552 residues long: MGRQVPSESLSLSEGCEVEISYKNNGNESVWYKAILEAKPNSIFKEELSVRLLKDDFSTPLNELRHKVLIRPIPPTNVQACIDIEIGTFVDADYKDAWWAGFVVKVIDDDKFWVCFDSPPDIIQFDRNHLRPTLEWVDEKIYSWWIIGSTRNSEFLKRLAEEPMFSPGTIVELCSKRDEGEVVWVPALVYKEFKENDEYRYIVKDKPLIGRSYKSRPSKTVDLRSLRPIPPPIRVKEYRLDEYIEVYHDGIGWRQGRVVKSEGGVMGSLFQNWCTLLLEATKKQLMFKQSDLRPLRVWEDGVWKTRESSLTQGSGDKTEVETQRKTFPKKTLPRNQNGSGNDSTLENENSNRKRKREENLCSGSSVEETNILFEKKLPVWKILESMEVFKTIPQSPHFRPLAEIREDSREMLAVGMMLTFSCLLEQVKALQHDEARSSFISLSNSFAELEKHGFNAQVAQLRINKLLTLRGMQSRKMDELKGAKKVTAEKESVKVENERKILELQRLNEEMAKEIAQSMSCEGKILQQLDNMKLEFQATASAPWPKWAFRST.

The tract at residues 308 to 361 (SSLTQGSGDKTEVETQRKTFPKKTLPRNQNGSGNDSTLENENSNRKRKREENLC) is disordered. Over residues 333–348 (PRNQNGSGNDSTLENE) the composition is skewed to polar residues. The 173-residue stretch at 371–543 (ILFEKKLPVW…LEFQATASAP (173 aa)) folds into the DUF724 domain.

Expressed at low levels in leaves, stems, flowers and siliques.

Its function is as follows. May be involved in the polar growth of plant cells via transportation of RNAs. The chain is DUF724 domain-containing protein 10 from Arabidopsis thaliana (Mouse-ear cress).